A 533-amino-acid polypeptide reads, in one-letter code: Protein transport protein SEC9 (533 aa).

Disordered stretches follow at residues 1-32 (MGFK…IATK), 68-184 (RPGA…MNAT), 200-246 (MAQD…KRAP), and 259-284 (PTNE…GQAP). Positions 11 to 24 (PPEEDTPERNRDLL) are enriched in basic and acidic residues. Residues 92–102 (GNTSRVGQPQQ) are compositionally biased toward polar residues. Over residues 157-172 (GGPGNPYGGSTAGAGT) the composition is skewed to gly residues. Residues 227–240 (RPQAAAETPRPQAA) are compositionally biased toward low complexity. T-SNARE coiled-coil homology domains lie at 318 to 380 (RFTK…VAEL) and 470 to 532 (DEME…LTNI).

This sequence belongs to the SNAP-25 family.

The sequence is that of Protein transport protein SEC9 (SEC9) from Eremothecium gossypii (strain ATCC 10895 / CBS 109.51 / FGSC 9923 / NRRL Y-1056) (Yeast).